The primary structure comprises 432 residues: Serine--tRNA ligase (432 aa).

Position 237-239 (237-239 (TSE)) interacts with L-serine. 268 to 270 (RSE) contributes to the ATP binding site. E291 serves as a coordination point for L-serine. Residue 355–358 (EISS) coordinates ATP. S390 lines the L-serine pocket.

This sequence belongs to the class-II aminoacyl-tRNA synthetase family. Type-1 seryl-tRNA synthetase subfamily. In terms of assembly, homodimer. The tRNA molecule binds across the dimer.

It localises to the cytoplasm. The catalysed reaction is tRNA(Ser) + L-serine + ATP = L-seryl-tRNA(Ser) + AMP + diphosphate + H(+). The enzyme catalyses tRNA(Sec) + L-serine + ATP = L-seryl-tRNA(Sec) + AMP + diphosphate + H(+). The protein operates within aminoacyl-tRNA biosynthesis; selenocysteinyl-tRNA(Sec) biosynthesis; L-seryl-tRNA(Sec) from L-serine and tRNA(Sec): step 1/1. Its function is as follows. Catalyzes the attachment of serine to tRNA(Ser). Is also able to aminoacylate tRNA(Sec) with serine, to form the misacylated tRNA L-seryl-tRNA(Sec), which will be further converted into selenocysteinyl-tRNA(Sec). The chain is Serine--tRNA ligase from Methylobacillus flagellatus (strain ATCC 51484 / DSM 6875 / VKM B-1610 / KT).